The sequence spans 343 residues: Aspartate carbamoyltransferase catalytic subunit (343 aa).

The carbamoyl phosphate site is built by arginine 91 and threonine 92. Lysine 119 is a binding site for L-aspartate. Residues arginine 141, histidine 171, and glutamine 174 each contribute to the carbamoyl phosphate site. Residues arginine 204 and arginine 259 each coordinate L-aspartate. Carbamoyl phosphate is bound by residues glycine 300 and proline 301.

The protein belongs to the aspartate/ornithine carbamoyltransferase superfamily. ATCase family. In terms of assembly, heterododecamer (2C3:3R2) of six catalytic PyrB chains organized as two trimers (C3), and six regulatory PyrI chains organized as three dimers (R2).

The catalysed reaction is carbamoyl phosphate + L-aspartate = N-carbamoyl-L-aspartate + phosphate + H(+). It functions in the pathway pyrimidine metabolism; UMP biosynthesis via de novo pathway; (S)-dihydroorotate from bicarbonate: step 2/3. In terms of biological role, catalyzes the condensation of carbamoyl phosphate and aspartate to form carbamoyl aspartate and inorganic phosphate, the committed step in the de novo pyrimidine nucleotide biosynthesis pathway. This chain is Aspartate carbamoyltransferase catalytic subunit, found in Burkholderia thailandensis (strain ATCC 700388 / DSM 13276 / CCUG 48851 / CIP 106301 / E264).